The following is a 353-amino-acid chain: Rhodopsin (353 aa).

At 1-36 (MNGTEGPFFYVPMLNTTGIVRSPYDYPQYYLVNPAA) the chain is on the extracellular side. Residues asparagine 2 and asparagine 15 are each glycosylated (N-linked (GlcNAc...) asparagine). Residues 37–61 (YAALGAYMFLLILLGFPINFLTLYV) traverse the membrane as a helical segment. Over 62 to 73 (TIEHKKLRTPLN) the chain is Cytoplasmic. The helical transmembrane segment at 74–96 (YILLNLAVANLFMVFGGFTTTMY) threads the bilayer. At 97 to 110 (TSMHGYFVLGRLGC) the chain is on the extracellular side. Cysteine 110 and cysteine 187 are disulfide-bonded. A helical transmembrane segment spans residues 111–133 (NLEGFFATLGGEIGLWSLVVLAI). Positions 134 to 136 (ERW) match the 'Ionic lock' involved in activated form stabilization motif. Residues 134–152 (ERWMVVCKPISNFRFGENH) are Cytoplasmic-facing. A helical membrane pass occupies residues 153 to 173 (AIMGLAFTWIMACACAVPPLV). Residues 174 to 202 (GWSRYIPEGMQCSCGVDYYTRAEGFNNES) are Extracellular-facing. A glycan (N-linked (GlcNAc...) asparagine) is linked at asparagine 200. Residues 203–224 (FVVYMFICHFLIPMAVVFFCYG) form a helical membrane-spanning segment. Residues 225-252 (RLLCAVKEAAAAQQESETTQRAEREVTR) lie on the Cytoplasmic side of the membrane. A helical membrane pass occupies residues 253-274 (MVVIMVVAFLICWLPYAGVAWW). At 275–286 (IFTHQGSEFGPV) the chain is on the extracellular side. A helical transmembrane segment spans residues 287–308 (FMTIPAFFAKSSSIYNPLIYIC). Lysine 296 is subject to N6-(retinylidene)lysine. Residues 309–353 (MNKQFRHCMITTLCCGKNPFEEEEGASTTSKTEASSVSSSSVSPA) lie on the Cytoplasmic side of the membrane. Residues cysteine 322 and cysteine 323 are each lipidated (S-palmitoyl cysteine). Residues 330-353 (EEEGASTTSKTEASSVSSSSVSPA) are disordered. Low complexity predominate over residues 334–353 (ASTTSKTEASSVSSSSVSPA).

The protein belongs to the G-protein coupled receptor 1 family. Opsin subfamily. Phosphorylated on some or all of the serine and threonine residues present in the C-terminal region. Post-translationally, contains one covalently linked retinal chromophore.

The protein resides in the membrane. The protein localises to the cell projection. It localises to the cilium. Its subcellular location is the photoreceptor outer segment. Its function is as follows. Photoreceptor required for image-forming vision at low light intensity. While most salt water fish species use retinal as chromophore, most freshwater fish use 3-dehydroretinal, or a mixture of retinal and 3-dehydroretinal. Light-induced isomerization of 11-cis to all-trans retinal triggers a conformational change that activates signaling via G-proteins. Subsequent receptor phosphorylation mediates displacement of the bound G-protein alpha subunit by arrestin and terminates signaling. This Tetraodon nigroviridis (Spotted green pufferfish) protein is Rhodopsin (rho).